A 469-amino-acid chain; its full sequence is Cytosolic beta-glucosidase (469 aa).

Glutamine 17, histidine 120, and asparagine 164 together coordinate substrate. The active-site Proton donor is the glutamate 165. Tyrosine 309 lines the substrate pocket. Residue glutamate 373 is the Nucleophile of the active site. Residues tryptophan 417 and 424–425 (EW) contribute to the substrate site.

The protein belongs to the glycosyl hydrolase 1 family. Klotho subfamily. In terms of processing, the N-terminus is blocked. As to expression, present in hepatocytes (at protein level).

Its subcellular location is the cytoplasm. The protein localises to the cytosol. It carries out the reaction Hydrolysis of terminal, non-reducing beta-D-glucosyl residues with release of beta-D-glucose.. The enzyme catalyses a beta-D-glucosyl-(1&lt;-&gt;1')-N-acylsphing-4-enine + H2O = an N-acylsphing-4-enine + D-glucose. The catalysed reaction is a beta-D-galactosyl-(1&lt;-&gt;1')-N-acylsphing-4-enine + H2O = an N-acylsphing-4-enine + D-galactose. It catalyses the reaction beta-D-glucosyl-(1&lt;-&gt;1)-sphing-4-enine + H2O = sphing-4-enine + D-glucose. It carries out the reaction beta-D-glucosyl-(1&lt;-&gt;1)-N-octadecanoylsphing-4-enine + H2O = N-octadecanoylsphing-4-enine + D-glucose. The enzyme catalyses beta-D-galactosyl-(1&lt;-&gt;1)-sphing-4-enine + H2O = sphing-4-enine + D-galactose. The catalysed reaction is beta-D-galactosyl-(1&lt;-&gt;1')-N-octadecanoylsphing-4-enine + H2O = N-octadecanoylsphing-4-enine + D-galactose. It catalyses the reaction a beta-D-xylosyl-(1&lt;-&gt;1')-N-acylsphing-4-enine + cholesterol = cholesteryl 3-beta-D-xyloside + an N-acylsphing-4-enine. With respect to regulation, inhibited by 2,4-dinitrophenyl-2-fluoro-2-deoxy-beta-D-glucopyranoside. Neutral cytosolic beta-glycosidase with a broad substrate specificity that could play a role in the catabolism of glycosylceramides. Has a significant glucosylceramidase activity in vitro. However, that activity is relatively low and its significance in vivo is not clear. Hydrolyzes galactosylceramide/GalCer, glucosylsphingosine/GlcSph and galactosylsphingosine/GalSph. However, the in vivo relevance of these activities is unclear. It can also hydrolyze a broad variety of dietary glycosides including phytoestrogens, flavonols, flavones, flavanones and cyanogens in vitro and could therefore play a role in the metabolism of xenobiotics. Possesses transxylosylase activity in vitro using xylosylated ceramides/XylCers (such as beta-D-xylosyl-(1&lt;-&gt;1')-N-acylsphing-4-enine) as xylosyl donors and cholesterol as acceptor. Could also play a role in the catabolism of cytosolic sialyl free N-glycans. This is Cytosolic beta-glucosidase from Cavia porcellus (Guinea pig).